The sequence spans 1048 residues: Probable histidine kinase 2 (1048 aa).

The Cytoplasmic segment spans residues 1–16 (MREVEEVSKWRRRCCY). A helical membrane pass occupies residues 17–37 (FWILFPLAVIATCMTITVVTF). At 38-336 (CSSTMYMTEV…AMVGVFRRGG (299 aa)) the chain is on the extracellular side. Residues 337–357 (VTMVAVACAAAAAATVACVLM) form a helical membrane-spanning segment. Residues 358–1048 (ARALRRAVAR…AVHGVCKGKN (691 aa)) are Cytoplasmic-facing. In terms of domain architecture, Histidine kinase spans 398 to 662 (SASHDIRSAL…CFGFNVLLKT (265 aa)). At His401 the chain carries Phosphohistidine; by autocatalysis. The region spanning 912–1044 (HVLLVEDTLV…RIVEAVHGVC (133 aa)) is the Response regulatory domain. Residue Asp975 is modified to 4-aspartylphosphate.

In terms of processing, activation probably requires a transfer of a phosphate group between a His in the transmitter domain and an Asp of the receiver domain.

It localises to the cell membrane. The catalysed reaction is ATP + protein L-histidine = ADP + protein N-phospho-L-histidine.. Its function is as follows. Cytokinin receptor related to bacterial two-component regulators. Functions as a histidine kinase and transmits the stress signal to a downstream MAPK cascade. The protein is Probable histidine kinase 2 of Oryza sativa subsp. indica (Rice).